Here is a 1337-residue protein sequence, read N- to C-terminus: C-Jun-amino-terminal kinase-interacting protein 3 (1337 aa).

In terms of domain architecture, RH1 spans V12–L100. Residues E50–L80 are kinesin-binding domain (KBD); essential for its function in axon elongation. The stretch at L58–E177 forms a coiled coil. Disordered regions lie at residues K183–V211 and S245–A285. Positions M184–P198 are enriched in polar residues. Residues N210–K226 form a JNK-binding domain (JBD); essential for its function in axon elongation region. The span at S261 to T270 shows a compositional bias: low complexity. A phosphothreonine; by MAPK mark is found at T266, T276, and T287. Residues G271 to P282 show a composition bias toward polar residues. 2 positions are modified to phosphoserine; by ROCK1: S315 and S365. S366 is modified (phosphoserine). A leucine zipper-like domain (LZ); essential for its function in axon elongation region spans residues L424 to L459. Residues A437 to M555 are a coiled coil. Positions L459–K515 are interaction with NTRK2. An RH2 domain is found at R521–P595. A Phosphoserine modification is found at S603. The interval D633 to V655 is disordered. Positions A639–V655 are enriched in basic and acidic residues. S677 is subject to Phosphoserine. Disordered stretches follow at residues W719–S772 and P859–S966. The segment covering L739–P765 has biased composition (basic and acidic residues). 2 stretches are compositionally biased toward polar residues: residues V879–S892 and E941–Q952.

The protein belongs to the JIP scaffold family. In terms of assembly, forms homo- or heterooligomeric complexes. The central region of MAPK8IP3 interacts with the C-terminal of MAPK8IP2 but not MAPK8IP1. Binds specific components of the JNK signaling pathway namely MAPK8/JNK1, MAPK9/JNK2 and MAPK10/JNK3 to the N-terminal region, MAP2K4/MKK4 and MAP2K7/MKK7 to the central region and MAP3K11 to the C-terminal region. Binds the TPR motif-containing C-terminal of kinesin light chain, KLC1. Pre-assembled MAPK8IP1 scaffolding complexes are then transported as a cargo of kinesin, to the required subcellular location. Interacts with ROCK1 and this interaction is enhanced by ultraviolet-B (UVB) radiation. Interacts with SH3RF2. Interacts with NTRK2/TRKB and NTRK3/TRKC. Phosphorylation by ROCK1 is crucial for the recruitment of JNK. As to expression, highly expressed throughout many regions of the brain and at lower levels in the heart, liver, lung, testes and kidney. All isoforms have been identified in the brain, isoform 1a is also expressed in the spleen and lung.

The protein localises to the cytoplasm. It is found in the golgi apparatus. The protein resides in the cytoplasmic vesicle. It localises to the cell projection. Its subcellular location is the growth cone. The protein localises to the axon. It is found in the dendrite. The protein resides in the perinuclear region. Its function is as follows. The JNK-interacting protein (JIP) group of scaffold proteins selectively mediates JNK signaling by aggregating specific components of the MAPK cascade to form a functional JNK signaling module. May function as a regulator of vesicle transport, through interactions with the JNK-signaling components and motor proteins. Promotes neuronal axon elongation in a kinesin- and JNK-dependent manner. Activates cofilin at axon tips via local activation of JNK, thereby regulating filopodial dynamics and enhancing axon elongation. Its binding to kinesin heavy chains (KHC), promotes kinesin-1 motility along microtubules and is essential for axon elongation and regeneration. Regulates cortical neuronal migration by mediating NTRK2/TRKB anterograde axonal transport during brain development. Acts as an adapter that bridges the interaction between NTRK2/TRKB and KLC1 and drives NTRK2/TRKB axonal but not dendritic anterograde transport, which is essential for subsequent BDNF-triggered signaling and filopodia formation. The chain is C-Jun-amino-terminal kinase-interacting protein 3 (Mapk8ip3) from Mus musculus (Mouse).